The following is a 290-amino-acid chain: Small ribosomal subunit biogenesis GTPase RsgA (290 aa).

One can recognise a CP-type G domain in the interval 62 to 219 (DNYLIRPQVA…VVDTPGFSTL (158 aa)). Residues 111–114 (NKID) and 162–170 (GPSGVGKST) each bind GTP. Residues cysteine 243, cysteine 248, histidine 250, and cysteine 256 each coordinate Zn(2+).

The protein belongs to the TRAFAC class YlqF/YawG GTPase family. RsgA subfamily. In terms of assembly, monomer. Associates with 30S ribosomal subunit, binds 16S rRNA. Requires Zn(2+) as cofactor.

It is found in the cytoplasm. One of several proteins that assist in the late maturation steps of the functional core of the 30S ribosomal subunit. Helps release RbfA from mature subunits. May play a role in the assembly of ribosomal proteins into the subunit. Circularly permuted GTPase that catalyzes slow GTP hydrolysis, GTPase activity is stimulated by the 30S ribosomal subunit. The chain is Small ribosomal subunit biogenesis GTPase RsgA from Clostridium novyi (strain NT).